The chain runs to 221 residues: Ribosomal RNA large subunit methyltransferase E (221 aa).

Residues glycine 60, tryptophan 62, aspartate 89, aspartate 105, and aspartate 134 each coordinate S-adenosyl-L-methionine. Lysine 174 serves as the catalytic Proton acceptor. The interval 199 to 221 is disordered; it reads KPKASRDKSSETFLLGRQLKHPG.

Belongs to the class I-like SAM-binding methyltransferase superfamily. RNA methyltransferase RlmE family.

The protein localises to the cytoplasm. It catalyses the reaction uridine(2552) in 23S rRNA + S-adenosyl-L-methionine = 2'-O-methyluridine(2552) in 23S rRNA + S-adenosyl-L-homocysteine + H(+). Its function is as follows. Specifically methylates the uridine in position 2552 of 23S rRNA at the 2'-O position of the ribose in the fully assembled 50S ribosomal subunit. In Ralstonia pickettii (strain 12J), this protein is Ribosomal RNA large subunit methyltransferase E.